A 1341-amino-acid chain; its full sequence is Subtilisin-like protease 2 (1341 aa).

Residues 1-18 form the signal peptide; sequence MLNIIYVVSLILIKFIFY. The propeptide at 19 to 686 is inhibition peptide; that stretch reads KECNNNNNYY…KLYNNKYSFL (668 aa). Disordered regions lie at residues 85-107 and 143-171; these read EKKTKGEENEIEKKKENDLEKKK and ADVSNNDNSGHEENNKHKLNKKNSSNYKN. Residues N165, N343, N449, N453, and N492 are each glycosylated (N-linked (GlcNAc...) asparagine). A disordered region spans residues 415–474; that stretch reads KKSKKEKENTQQKGGNNPNVDINILNNNNNNNNNNNSNNNSNSMNDEEINYNNNNNNKES. The span at 430–474 shows a compositional bias: low complexity; that stretch reads NNPNVDINILNNNNNNNNNNNSNNNSNSMNDEEINYNNNNNNKES. The tract at residues 499-530 is disordered; the sequence is IYHNKNDNSYKNKKEGTGKNNDNNDPNNNNNK. The span at 502–515 shows a compositional bias: basic and acidic residues; sequence NKNDNSYKNKKEGT. Positions 517 to 530 are enriched in low complexity; sequence KNNDNNDPNNNNNK. Residues N550, N641, and N728 are each glycosylated (N-linked (GlcNAc...) asparagine). At 687 to 1136 the chain is on the extracellular side; it reads NKFLNIEPLI…LYNLYEYDSH (450 aa). Residues 726–1019 form the Peptidase S8 domain; that stretch reads TWNLSIIRVF…DSLVNAEGAV (294 aa). Catalysis depends on charge relay system residues D754 and H797. N820, N856, N892, and N950 each carry an N-linked (GlcNAc...) asparagine glycan. S960 serves as the catalytic Charge relay system. Residues N1009 and N1105 are each glycosylated (N-linked (GlcNAc...) asparagine). The chain crosses the membrane as a helical span at residues 1137–1157; it reads YLLASVILFFLALLSIFVGMI. At 1158 to 1341 the chain is on the cytoplasmic side; the sequence is YMKSRKHSDK…MNQLDDMFMK (184 aa).

Belongs to the peptidase S8 family. In terms of processing, proteolytically cleaved at the N-terminus to generate a 74kDa intermediate which is further processed into a 72kDa form. The first maturation cleavage is autocatalytic, occurs in the ER and is necessary for the subsequent SUB2 trafficking to the microneme. The second cleavage may be mediated by PMX/plasmepsin X.

Its subcellular location is the cell membrane. It is found in the cytoplasmic vesicle. The protein resides in the secretory vesicle. It localises to the microneme membrane. It catalyses the reaction Hydrolysis of proteins with broad specificity for peptide bonds, and a preference for a large uncharged residue in P1. Hydrolyzes peptide amides.. Its activity is regulated as follows. Activation may be calcium-dependent. Inhibited by the non-covalent interaction with the cleaved propeptide. In terms of biological role, serine protease which plays an essential role in the shedding of AMA1, MSP1 and MSP7 from the surface of the invading merozoite; this step is essential for productive invasion and the release of the adhesion between the erythrocyte and the merozoite. May cleave TRAMP/PTTRAMP, thereby shedding TRAMP from the merozoite surface during erythrocyte invasion. The sequence is that of Subtilisin-like protease 2 from Plasmodium falciparum (isolate 3D7).